We begin with the raw amino-acid sequence, 652 residues long: NADH-ubiquinone oxidoreductase chain 5 (652 aa).

Helical transmembrane passes span 1 to 21 (MYLS…FLGR), 30 to 50 (LITC…FIEV), 72 to 92 (IIWG…VLII), 119 to 139 (LFTF…MFVG), 140 to 160 (WEGV…RIAA), 177 to 197 (FLTI…YSTV), 200 to 220 (LAPY…LIGA), 241 to 261 (TPVS…YLLM), 274 to 294 (LLLC…IGLF), 301 to 319 (VIAY…AIGL), 331 to 351 (NHAF…HAVA), 365 to 385 (FLPL…AFPF), 403 to 423 (FSFS…FTTL), 454 to 474 (LFLT…GFIT), 505 to 525 (FAVP…FSII), and 619 to 639 (LYIL…FNFL).

The protein belongs to the complex I subunit 5 family.

It localises to the mitochondrion inner membrane. The catalysed reaction is a ubiquinone + NADH + 5 H(+)(in) = a ubiquinol + NAD(+) + 4 H(+)(out). Core subunit of the mitochondrial membrane respiratory chain NADH dehydrogenase (Complex I) that is believed to belong to the minimal assembly required for catalysis. Complex I functions in the transfer of electrons from NADH to the respiratory chain. The immediate electron acceptor for the enzyme is believed to be ubiquinone. This chain is NADH-ubiquinone oxidoreductase chain 5 (ND5), found in Podospora anserina (strain S / ATCC MYA-4624 / DSM 980 / FGSC 10383) (Pleurage anserina).